An 88-amino-acid polypeptide reads, in one-letter code: Prolevitide (88 aa).

Positions 1–20 (MYKGIFLCVLFAVICANSLA) are cleaved as a signal peptide. Position 74 is a pyrrolidone carboxylic acid (glutamine 74). Glutamine 87 carries the glutamine amide modification.

This sequence belongs to the gastrin/cholecystokinin family. As to expression, expressed by the skin glands.

It localises to the secreted. This is Prolevitide from Xenopus laevis (African clawed frog).